We begin with the raw amino-acid sequence, 132 residues long: Methenyltetrahydromethanopterin cyclohydrolase (132 aa).

The protein belongs to the MCH family.

Its subcellular location is the cytoplasm. It carries out the reaction 5,10-methenyl-5,6,7,8-tetrahydromethanopterin + H2O = N(5)-formyl-5,6,7,8-tetrahydromethanopterin + H(+). It functions in the pathway one-carbon metabolism; formaldehyde degradation; formate from formaldehyde (H(4)MPT route): step 3/5. Catalyzes the hydrolysis of methenyl-H(4)MPT(+) to 5-formyl-H(4)MPT. The sequence is that of Methenyltetrahydromethanopterin cyclohydrolase (mch) from Methylomicrobium album (Methylobacter albus).